Here is a 783-residue protein sequence, read N- to C-terminus: LPS-assembly protein LptD (783 aa).

The N-terminal stretch at Met-1–Ala-24 is a signal peptide.

Belongs to the LptD family. As to quaternary structure, component of the lipopolysaccharide transport and assembly complex. Interacts with LptE and LptA.

Its subcellular location is the cell outer membrane. In terms of biological role, together with LptE, is involved in the assembly of lipopolysaccharide (LPS) at the surface of the outer membrane. In Vibrio cholerae serotype O1 (strain ATCC 39315 / El Tor Inaba N16961), this protein is LPS-assembly protein LptD.